The chain runs to 928 residues: Mitogen-activated protein kinase kinase kinase dlk-1 (928 aa).

Residues 1–72 (MTSTTMVTTL…GQKEGSPDPK (72 aa)) are disordered. Residues 42–52 (LVTQSAPNTPI) are compositionally biased toward polar residues. Positions 53 to 69 (QHREQANAEFGQKEGSP) are enriched in basic and acidic residues. The region spanning 135-377 (ISELEWLGSG…FSHIRQHWEI (243 aa)) is the Protein kinase domain. ATP is bound by residues 141–149 (LGSGSQGAV) and K162. D246 (proton acceptor) is an active-site residue. The interval 459–480 (LQGCFTELKLKESELAEWEKDL) is leucine-zipper. Disordered stretches follow at residues 483-575 (REQW…DAIR), 644-696 (RRVS…PSRN), and 802-845 (ENAN…SMES). The span at 509-519 (GYDDMSSDEDV) shows a compositional bias: acidic residues. Residues 530 to 557 (SNTSSSSGVQSSPFSRQSSSRSSAGQQT) are compositionally biased toward low complexity. Residues 605–814 (SAGAGSCTAI…NDVDLTSSMD (210 aa)) are important for interaction between isoform a and isoform c. Over residues 647–656 (STSVNKSTAV) the composition is skewed to polar residues. A compositionally biased stretch (low complexity) spans 677 to 695 (SCSSPRSSSKLNRSSYPSR). Residues 823–833 (ADVESSEEDEG) show a composition bias toward acidic residues. 2 positions are modified to phosphoserine: S874 and S878. The SDGLSD hexapeptide signature appears at 874 to 879 (SDGLSD).

Belongs to the protein kinase superfamily. STE Ser/Thr protein kinase family. MAP kinase kinase kinase subfamily. In terms of assembly, homooligomer (via leucine zipper domain and hexapeptide motif). Isoform a (via leucine zipper domain) forms a heterooligomer with isoform c (via leucine zipper domain). Isoform c does not self-associate. Requires Mg(2+) as cofactor. In terms of processing, ubiquitinated by rpm-1. Negatively regulated by ubiquitination by fsn-1 bound rpm-1, followed by degradation. Phosphorylation at Ser-874 and/or at Ser-878 abolishes interaction with isoform c and promotes binding to isoform a kinase domain (likely in trans) resulting in isoform a self-association and activation. As to expression, expressed in nerve ring, nerve cord, neurons, and pharynx.

The protein localises to the synapse. The protein resides in the cytoplasm. Its subcellular location is the cell projection. It is found in the axon. It localises to the dendrite. The protein localises to the cilium. It carries out the reaction L-seryl-[protein] + ATP = O-phospho-L-seryl-[protein] + ADP + H(+). The enzyme catalyses L-threonyl-[protein] + ATP = O-phospho-L-threonyl-[protein] + ADP + H(+). Its activity is regulated as follows. Inactive when associated with isoform c. Dissociation from isoform c, which is dependent on the phosphorylation of the C-terminal hexapeptide, results in self-association and activation. Transient increase in Ca(2+) levels caused by axonal injury or synaptic activity triggers the dissociation of isoform a from isoform c; the dissociation may be influenced by the phosphorylation status of the C-terminal hexapeptide. Its function is as follows. Component of a MAP kinase pathway that functions presynaptically to regulate synaptic architecture and presynaptic differentiation. Phosphorylates and activates mkk-4. Has a role in axonal regrowth following injury and synaptogenesis. Plays a role in modulating polymerization of neuronal microtubules. Also promotes tubulin post-translational modifications that protect microtubules. Plays a role in cilium length regulation, possibly by reducing rab-5 mediated endocytosis, and may also have a role in intraflagellar transport in cilia. Plays a role in the formation of muscle connections, also called muscle arm extensions, between the body wall and the motor axons in the dorsal and ventral cord. In terms of biological role, has a role in synapse and axon development, and in axonal regrowth following injury. By forming heterooligomers with isoform a, acts as an inhibitor of isoform a activation. Its inhibitory function is independent of its catalytic activity. The protein is Mitogen-activated protein kinase kinase kinase dlk-1 (dlk-1) of Caenorhabditis elegans.